We begin with the raw amino-acid sequence, 61 residues long: Probable tautomerase LL0574 (61 aa).

Pro-2 (proton acceptor; via imino nitrogen) is an active-site residue.

It belongs to the 4-oxalocrotonate tautomerase family.

The chain is Probable tautomerase LL0574 from Lactococcus lactis subsp. lactis (strain IL1403) (Streptococcus lactis).